The following is a 450-amino-acid chain: Homogentisate 1,2-dioxygenase (450 aa).

Catalysis depends on His304, which acts as the Proton acceptor. 2 residues coordinate Fe cation: His347 and Glu353. Homogentisate contacts are provided by Tyr362 and His383. Fe cation is bound at residue His383.

The protein belongs to the homogentisate dioxygenase family. Hexamer; dimer of trimers. Fe cation is required as a cofactor.

The enzyme catalyses homogentisate + O2 = 4-maleylacetoacetate + H(+). The protein operates within amino-acid degradation; L-phenylalanine degradation; acetoacetate and fumarate from L-phenylalanine: step 4/6. Involved in the catabolism of homogentisate (2,5-dihydroxyphenylacetate or 2,5-OH-PhAc), a central intermediate in the degradation of phenylalanine and tyrosine. Catalyzes the oxidative ring cleavage of the aromatic ring of homogentisate to yield maleylacetoacetate. The polypeptide is Homogentisate 1,2-dioxygenase (Burkholderia mallei (strain NCTC 10229)).